The primary structure comprises 439 residues: FBD-associated F-box protein At5g56380 (439 aa).

Positions 1-61 constitute an F-box domain; that stretch reads MDRISHLADE…LPETWGYQEP (61 aa). Residues 358–406 enclose the FBD domain; it reads WNQPGSVPRCLSSSLETLEWVEYGGTHEEKELSTYLFKTAVCFKKASFT.

The chain is FBD-associated F-box protein At5g56380 from Arabidopsis thaliana (Mouse-ear cress).